Consider the following 393-residue polypeptide: S-adenosylmethionine synthase 1 (393 aa).

Glu9 is a binding site for Mg(2+). Residue His15 coordinates ATP. K(+) is bound at residue Glu43. Residues Glu56 and Gln99 each coordinate L-methionine. ATP-binding positions include 167–169 (DGK), 235–238 (SGRF), Asp246, 252–253 (RK), Ala269, Lys273, and Lys277. Asp246 serves as a coordination point for L-methionine. Residue Lys277 participates in L-methionine binding.

This sequence belongs to the AdoMet synthase family. As to quaternary structure, homotetramer. It depends on Mn(2+) as a cofactor. Mg(2+) serves as cofactor. Requires Co(2+) as cofactor. K(+) is required as a cofactor.

It is found in the cytoplasm. It carries out the reaction L-methionine + ATP + H2O = S-adenosyl-L-methionine + phosphate + diphosphate. Its pathway is amino-acid biosynthesis; S-adenosyl-L-methionine biosynthesis; S-adenosyl-L-methionine from L-methionine: step 1/1. In terms of biological role, catalyzes the formation of S-adenosylmethionine from methionine and ATP. The reaction comprises two steps that are both catalyzed by the same enzyme: formation of S-adenosylmethionine (AdoMet) and triphosphate, and subsequent hydrolysis of the triphosphate. The sequence is that of S-adenosylmethionine synthase 1 (METK1) from Solanum tuberosum (Potato).